The chain runs to 594 residues: MSVRTSSRSNKGQNKYIEYLLQEETEAPKKKRTKKKVDSATEKNKKSDSSQEPRKDTENVRTDEVDEADEGYVRCLCGANNENYDAAEYSHGDMVQCDGCDTWQHIKCMTDGKDTIDGLMSEDSKYYCELCDPSLYAHLETSKEAEVSEDEDYHDDVYKPVNDHDDNDADVFLDEESPRKRKRSPDSAKGIHIKSKQVKKSNGSKKRNKSIDAAKSDTAENEMPTRKDFESEKEHKLRYNAEKMFSTLFSKFIVPETIEAKLYELPDGKDVISISQEFAHNLEEELYKACLNIEFGTLDKIYTEKVRSLYSNLKDKKNLELKAHVVEGKLPLNKLVNMNASELANPDLQEFKEKRDKVILENFIVEVPDKPMYVKTHKGDELIEDIAEPQEDILYSKDSIRLHNIDSIDSDKSKIEQTHAISKEPSPSTIINEESLNCAFLYPGLGLEFTGYLNYIGVSQKLRRDIFKEAIGDGKLYVEGRLPTTTAAPYLKEISCSRAILVYQLFPSNDSESKTTFADVVDSLENKGRIAGIKPKTRYEKDFYIVPSKGGEIPEILKDILGSHNDERSERFSRMKSDERTLFAFVVVKQEFIH.

Residues 1–13 show a composition bias toward polar residues; sequence MSVRTSSRSNKGQ. The disordered stretch occupies residues 1 to 65; that stretch reads MSVRTSSRSN…DTENVRTDEV (65 aa). Positions 36-63 are enriched in basic and acidic residues; sequence KVDSATEKNKKSDSSQEPRKDTENVRTD. Residues 72 to 134 form a PHD-type zinc finger; it reads YVRCLCGANN…KYYCELCDPS (63 aa). The tract at residues 142 to 231 is disordered; that stretch reads SKEAEVSEDE…EMPTRKDFES (90 aa). Residues 155–164 show a composition bias toward basic and acidic residues; that stretch reads DDVYKPVNDH. Over residues 165–175 the composition is skewed to acidic residues; that stretch reads DDNDADVFLDE. Serine 177 carries the phosphoserine modification. Residues 191-208 show a composition bias toward basic residues; it reads IHIKSKQVKKSNGSKKRN. Basic and acidic residues predominate over residues 209–231; that stretch reads KSIDAAKSDTAENEMPTRKDFES. A TFIIS central domain is found at 254 to 365; the sequence is VPETIEAKLY…DKVILENFIV (112 aa).

Belongs to the BYE1 family. Interacts with the RNA polymerase RPB1 subunit and specifically with the trimethylated H3 histone H3K4me3.

It localises to the nucleus. In terms of biological role, negative regulator of transcription elongation. This chain is Transcription factor BYE1 (BYE1), found in Saccharomyces cerevisiae (strain YJM789) (Baker's yeast).